We begin with the raw amino-acid sequence, 188 residues long: dCTP deaminase (188 aa).

DCTP contacts are provided by residues 111-116 (KSTYAR), 135-137 (TLE), Q156, Y170, and Q180. E137 (proton donor/acceptor) is an active-site residue.

It belongs to the dCTP deaminase family. Homotrimer.

It catalyses the reaction dCTP + H2O + H(+) = dUTP + NH4(+). Its pathway is pyrimidine metabolism; dUMP biosynthesis; dUMP from dCTP (dUTP route): step 1/2. Functionally, catalyzes the deamination of dCTP to dUTP. This chain is dCTP deaminase, found in Francisella philomiragia subsp. philomiragia (strain ATCC 25017 / CCUG 19701 / FSC 153 / O#319-036).